Reading from the N-terminus, the 354-residue chain is Uroporphyrinogen decarboxylase (354 aa).

Residues R30–R34, D79, Y154, S209, and H333 each bind substrate.

Belongs to the uroporphyrinogen decarboxylase family. As to quaternary structure, homodimer.

It is found in the cytoplasm. The catalysed reaction is uroporphyrinogen III + 4 H(+) = coproporphyrinogen III + 4 CO2. The protein operates within porphyrin-containing compound metabolism; protoporphyrin-IX biosynthesis; coproporphyrinogen-III from 5-aminolevulinate: step 4/4. Functionally, catalyzes the decarboxylation of four acetate groups of uroporphyrinogen-III to yield coproporphyrinogen-III. The protein is Uroporphyrinogen decarboxylase of Mycolicibacterium gilvum (strain PYR-GCK) (Mycobacterium gilvum (strain PYR-GCK)).